We begin with the raw amino-acid sequence, 226 residues long: DNA mismatch repair protein MutH (226 aa).

It belongs to the MutH family.

The protein resides in the cytoplasm. Sequence-specific endonuclease that cleaves unmethylated GATC sequences. It is involved in DNA mismatch repair. This is DNA mismatch repair protein MutH from Actinobacillus pleuropneumoniae serotype 3 (strain JL03).